The sequence spans 71 residues: Translation initiation factor IF-1 (71 aa).

The 71-residue stretch at 1-71 (MSKDDLIQFT…LTKGRVIHRH (71 aa)) folds into the S1-like domain.

Belongs to the IF-1 family. As to quaternary structure, component of the 30S ribosomal translation pre-initiation complex which assembles on the 30S ribosome in the order IF-2 and IF-3, IF-1 and N-formylmethionyl-tRNA(fMet); mRNA recruitment can occur at any time during PIC assembly.

Its subcellular location is the cytoplasm. Functionally, one of the essential components for the initiation of protein synthesis. Stabilizes the binding of IF-2 and IF-3 on the 30S subunit to which N-formylmethionyl-tRNA(fMet) subsequently binds. Helps modulate mRNA selection, yielding the 30S pre-initiation complex (PIC). Upon addition of the 50S ribosomal subunit IF-1, IF-2 and IF-3 are released leaving the mature 70S translation initiation complex. The protein is Translation initiation factor IF-1 of Rickettsia akari (strain Hartford).